The chain runs to 307 residues: Serine/threonine-protein phosphatase 4 catalytic subunit (307 aa).

Mn(2+) contacts are provided by Asp54, His56, Asp82, and Asn114. His115 functions as the Proton donor in the catalytic mechanism. Residues His164 and His238 each coordinate Mn(2+). Leu307 is modified (leucine methyl ester).

Belongs to the PPP phosphatase family. PP-4 (PP-X) subfamily. In terms of assembly, serine/threonine-protein phosphatase 4 (PP4) occurs in different assemblies of the catalytic and one or more regulatory subunits. Probably part of a PP4 PPP4C-PPP4R2-PPP4R3 complex containing Pp4-19C, PPP4R2r and flfl. Interacts with Ptpa; thereby mediating basal localization of the Miranda (Mira) complex; probably by dephosphorylation of Mira. Requires Mn(2+) as cofactor. In terms of processing, reversibly methyl esterified on Leu-307 by leucine carboxyl methyltransferase 1 (LCMT1) and protein phosphatase methylesterase 1 (PPME1). Carboxyl methylation influences the affinity of the catalytic subunit for the different regulatory subunits, thereby modulating the PP2A holoenzyme's substrate specificity, enzyme activity and cellular localization.

Its subcellular location is the cytoplasm. It is found in the nucleus. It localises to the cytoskeleton. The protein localises to the microtubule organizing center. The protein resides in the centrosome. The catalysed reaction is O-phospho-L-seryl-[protein] + H2O = L-seryl-[protein] + phosphate. It catalyses the reaction O-phospho-L-threonyl-[protein] + H2O = L-threonyl-[protein] + phosphate. In terms of biological role, protein phosphatase that regulates many processes such as microtubule organization at centrosomes. The probable PP4 complex Pp4-19C-PPP4R2r-flfl (PPP4C-PPP4R2-PPP4R3) is required to prevent caspase-induced cell death (in vitro). The sequence is that of Serine/threonine-protein phosphatase 4 catalytic subunit (Pp4-19C) from Drosophila melanogaster (Fruit fly).